The primary structure comprises 1707 residues: Latrophilin Cirl (1707 aa).

The Extracellular portion of the chain corresponds to 1-767; sequence MLPTILSISY…LFTMFDGNMR (767 aa). The SUEL-type lectin domain maps to 25 to 114; sequence ACEGKKLTIE…KYLEAHYQCI (90 aa). Asn-142 carries N-linked (GlcNAc...) asparagine glycosylation. The disordered stretch occupies residues 176 to 301; that stretch reads GLFNVPPQHT…TAASGAVVPG (126 aa). Composition is skewed to polar residues over residues 185 to 198 and 256 to 265; these read TAVT…STTA and NATSPSNTRI. Residue Asn-256 is glycosylated (N-linked (GlcNAc...) asparagine). Residues 275-285 show a composition bias toward low complexity; it reads DDGTLLTTKSS. 6 N-linked (GlcNAc...) asparagine glycosylation sites follow: Asn-302, Asn-341, Asn-398, Asn-655, Asn-703, and Asn-730. The tract at residues 376–400 is disordered; sequence YDEYDDDPSSTTPAPNGGDCLHNSS. Positions 561–754 constitute a GAIN-B domain; the sequence is RSVVQKVKNI…AILMDVVDEH (194 aa). 2 disulfide bridges follow: Cys-709/Cys-736 and Cys-724/Cys-738. The tract at residues 709-754 is GPS; it reads CVFWNYIDHAWSANGCSLESTNRTHSVCSCNHLTNFAILMDVVDEH. A helical membrane pass occupies residues 768 to 788; sequence IFIYISIGICVVFIVIALLTL. The Cytoplasmic segment spans residues 789-801; the sequence is KLFNGVFVKSART. The helical transmembrane segment at 802-822 threads the bilayer; sequence SIYTSIYLCLLAIELLFLLGI. Residues 823-828 lie on the Extracellular side of the membrane; sequence EQTETS. The chain crosses the membrane as a helical span at residues 829-849; sequence IFCGFITIFLHCAILSGTAWF. At 850–875 the chain is on the cytoplasmic side; it reads CYEAFHSYSTLTSDELLLEVDQTPKV. Residues 876–896 form a helical membrane-spanning segment; the sequence is NCYYLLSYGLSLSVVAISLVI. The Extracellular portion of the chain corresponds to 897-920; it reads DPSTYTQNDYCVLMEANALFYATF. A helical membrane pass occupies residues 921-941; it reads VIPVLVFFVAAIGYTFLSWII. Residues 942–968 lie on the Cytoplasmic side of the membrane; that stretch reads LCRKSRTGLKTKEHTRLASVRFDIRCS. A helical transmembrane segment spans residues 969 to 989; it reads FVFLLLLSAVWCSSYFYLRGA. The Extracellular portion of the chain corresponds to 990–999; that stretch reads KMDDDTADVY. A helical membrane pass occupies residues 1000–1020; that stretch reads GYCFICFNTLLGLYIFVFHCI. Residues 1021–1707 are Cytoplasmic-facing; that stretch reads QNEKIRREYR…VRCYLEPLAK (687 aa). The residue at position 1156 (Ser-1156) is a Phosphoserine. 2 disordered regions span residues 1169-1188 and 1236-1260; these read AHKQ…GEGY and KPNS…SGSL. Over residues 1172 to 1181 the composition is skewed to low complexity; it reads QQQQQQQQQQ. Ser-1255 and Ser-1262 each carry phosphoserine. The span at 1316 to 1326 shows a compositional bias: low complexity; sequence QQLHQQQQQQL. Disordered stretches follow at residues 1316–1335, 1450–1538, 1563–1582, and 1612–1687; these read QQLH…QVEQ, GGGS…SDER, APLD…EHNG, and GGRL…QQRH. 2 positions are modified to phosphoserine: Ser-1327 and Ser-1328. Positions 1456 to 1481 are enriched in low complexity; sequence GGSVSSRSQQQQLKKQQQQQSLAQQR. Composition is skewed to acidic residues over residues 1489-1503 and 1513-1526; these read DDDD…EEAT and CDED…DLED. Positions 1635–1650 are enriched in polar residues; that stretch reads QTPAQKRQQLQKLSPQ. Low complexity predominate over residues 1651–1673; it reads STTSSSSHTSHSNPNPHPLQLTH. Over residues 1674 to 1686 the composition is skewed to basic residues; it reads PHPHQHPPHHQQR.

The protein belongs to the G-protein coupled receptor 2 family. LN-TM7 subfamily. In terms of assembly, forms a heterodimer, consisting of a large extracellular region non-covalently linked to a seven-transmembrane moiety. Post-translationally, proteolytically cleaved into 2 subunits, an extracellular subunit and a seven-transmembrane subunit.

The protein localises to the cell membrane. The sequence is that of Latrophilin Cirl from Drosophila yakuba (Fruit fly).